The primary structure comprises 412 residues: 1-deoxy-D-xylulose 5-phosphate reductoisomerase (412 aa).

NADPH-binding residues include T10, G11, S12, I13, G36, K37, N38, and N130. K131 provides a ligand contact to 1-deoxy-D-xylulose 5-phosphate. NADPH is bound at residue E132. Residue D156 coordinates Mn(2+). Residues S157, E158, S194, and H217 each coordinate 1-deoxy-D-xylulose 5-phosphate. Residue E158 coordinates Mn(2+). G223 is an NADPH binding site. 1-deoxy-D-xylulose 5-phosphate is bound by residues S230, N235, K236, and E239. E239 lines the Mn(2+) pocket.

This sequence belongs to the DXR family. Requires Mg(2+) as cofactor. The cofactor is Mn(2+).

It catalyses the reaction 2-C-methyl-D-erythritol 4-phosphate + NADP(+) = 1-deoxy-D-xylulose 5-phosphate + NADPH + H(+). It participates in isoprenoid biosynthesis; isopentenyl diphosphate biosynthesis via DXP pathway; isopentenyl diphosphate from 1-deoxy-D-xylulose 5-phosphate: step 1/6. Catalyzes the NADPH-dependent rearrangement and reduction of 1-deoxy-D-xylulose-5-phosphate (DXP) to 2-C-methyl-D-erythritol 4-phosphate (MEP). The protein is 1-deoxy-D-xylulose 5-phosphate reductoisomerase of Prochlorococcus marinus (strain NATL1A).